Consider the following 353-residue polypeptide: Paraneoplastic antigen Ma1 homolog (353 aa).

This sequence belongs to the PNMA family. In terms of tissue distribution, testis and brain specific.

It is found in the nucleus. The protein resides in the nucleolus. This chain is Paraneoplastic antigen Ma1 homolog (Pnma1), found in Rattus norvegicus (Rat).